The chain runs to 221 residues: Thymidylate kinase (221 aa).

Position 10-17 (glycine 10–threonine 17) interacts with ATP.

This sequence belongs to the thymidylate kinase family.

It carries out the reaction dTMP + ATP = dTDP + ADP. Its function is as follows. Phosphorylation of dTMP to form dTDP in both de novo and salvage pathways of dTTP synthesis. This chain is Thymidylate kinase, found in Desulforudis audaxviator (strain MP104C).